Consider the following 217-residue polypeptide: MDTKRVGILVVDLSQWGRKEHFEAFQSFAQCTFSQTVQLDITSLLKTVKQNGYKFYPTFIYIISLLVNKHAEFRMAMKDGELVIWDSVNPGYNIFHEQTETFSSLWSYYHKDINRFLKTYSEDIAQYGDDLAYFPKEFIENMFFVSANPWVSFTSFNLNMANINNFFAPVFTIGKYYTQGDKVLMPLAIQVHHAVCDGFHVGRLLNEIQQYCDEGCK.

Histidine 193 (proton acceptor) is an active-site residue.

This sequence belongs to the chloramphenicol acetyltransferase family. In terms of assembly, homotrimer.

It catalyses the reaction chloramphenicol + acetyl-CoA = chloramphenicol 3-acetate + CoA. This enzyme is an effector of chloramphenicol resistance in bacteria. The polypeptide is Chloramphenicol acetyltransferase (cat) (Proteus mirabilis).